The primary structure comprises 1035 residues: Ephrin type-A receptor 6 (1035 aa).

Positions 1-22 (MGGCEVREFLLQFGFFLPLLTA) are cleaved as a signal peptide. The Extracellular portion of the chain corresponds to 23 to 549 (WTGDCSHVSN…MAAEQGQILV (527 aa)). The region spanning 33-211 (QVVLLDTTTV…FYKKCPFTVR (179 aa)) is the Eph LBD domain. Fibronectin type-III domains follow at residues 330 to 440 (PPSA…TDHD) and 441 to 536 (APSL…TGDE). 3 N-linked (GlcNAc...) asparagine glycosylation sites follow: N342, N396, and N409. Residues 550-570 (IATAAVGGFTLLVILTLFFLI) form a helical membrane-spanning segment. Topologically, residues 571-1035 (TGRCQWYIKA…MHIQEKGFHV (465 aa)) are cytoplasmic. 2 positions are modified to phosphotyrosine; by autocatalysis: Y605 and Y611. Positions 630 to 943 (IRIERVIGAG…RNPSALHTLV (314 aa)) constitute a Protein kinase domain. ATP is bound by residues 636–644 (IGAGEFGEV) and K662. D797 (proton acceptor) is an active-site residue. Phosphotyrosine; by autocatalysis occurs at positions 830 and 977. The region spanning 960-1024 (PLFVTVGDWL…VSSIQTLRLH (65 aa)) is the SAM domain. A PDZ-binding motif is present at residues 1033–1035 (FHV).

This sequence belongs to the protein kinase superfamily. Tyr protein kinase family. Ephrin receptor subfamily. In terms of assembly, heterotetramer upon binding of the ligand. The heterotetramer is composed of an ephrin dimer and a receptor dimer. Oligomerization is probably required to induce biological responses. Interacts (via SAM domain) with ANKS1A (via SAM domain).

It is found in the membrane. It catalyses the reaction L-tyrosyl-[protein] + ATP = O-phospho-L-tyrosyl-[protein] + ADP + H(+). Receptor tyrosine kinase which binds promiscuously GPI-anchored ephrin-A family ligands residing on adjacent cells, leading to contact-dependent bidirectional signaling into neighboring cells. The signaling pathway downstream of the receptor is referred to as forward signaling while the signaling pathway downstream of the ephrin ligand is referred to as reverse signaling. The polypeptide is Ephrin type-A receptor 6 (Epha6) (Mus musculus (Mouse)).